The sequence spans 96 residues: Small ribosomal subunit protein bS6 (96 aa).

This sequence belongs to the bacterial ribosomal protein bS6 family.

Binds together with bS18 to 16S ribosomal RNA. This is Small ribosomal subunit protein bS6 (rpsF) from Mycobacterium leprae (strain TN).